We begin with the raw amino-acid sequence, 478 residues long: Cysteine--tRNA ligase (478 aa).

Cys-27 contributes to the Zn(2+) binding site. The 'HIGH' region signature appears at 29–39 (PTTYNFIHLGN). Zn(2+) contacts are provided by Cys-207, His-232, and Glu-236. The 'KMSKS' region signature appears at 264–268 (KMSKS). Residue Lys-267 coordinates ATP.

It belongs to the class-I aminoacyl-tRNA synthetase family. Monomer. Requires Zn(2+) as cofactor.

The protein localises to the cytoplasm. The enzyme catalyses tRNA(Cys) + L-cysteine + ATP = L-cysteinyl-tRNA(Cys) + AMP + diphosphate. The chain is Cysteine--tRNA ligase from Desulforudis audaxviator (strain MP104C).